The chain runs to 329 residues: Peroxidase 58 (329 aa).

An N-terminal signal peptide occupies residues 1–23; sequence MGLSKTIPLVLLPILMFGVLSNA. Intrachain disulfides connect cysteine 34/cysteine 116, cysteine 67/cysteine 72, cysteine 122/cysteine 325, and cysteine 201/cysteine 234. N-linked (GlcNAc...) asparagine glycosylation occurs at asparagine 36. The active-site Proton acceptor is histidine 65. Ca(2+)-binding residues include aspartate 66, valine 69, glycine 71, aspartate 73, and serine 75. Proline 164 is a binding site for substrate. Residue histidine 194 participates in heme b binding. Threonine 195 lines the Ca(2+) pocket. Asparagine 210 carries N-linked (GlcNAc...) asparagine glycosylation. Ca(2+) contacts are provided by aspartate 247, serine 250, and aspartate 255.

Belongs to the peroxidase family. Classical plant (class III) peroxidase subfamily. Heme b is required as a cofactor. It depends on Ca(2+) as a cofactor.

Its subcellular location is the secreted. It carries out the reaction 2 a phenolic donor + H2O2 = 2 a phenolic radical donor + 2 H2O. Its function is as follows. Removal of H(2)O(2), oxidation of toxic reductants, biosynthesis and degradation of lignin, suberization, auxin catabolism, response to environmental stresses such as wounding, pathogen attack and oxidative stress. These functions might be dependent on each isozyme/isoform in each plant tissue. This Arabidopsis thaliana (Mouse-ear cress) protein is Peroxidase 58 (PER58).